Consider the following 318-residue polypeptide: Coproporphyrin III ferrochelatase (318 aa).

Residues His-186 and Glu-268 each coordinate Fe(2+).

It belongs to the ferrochelatase family.

Its subcellular location is the cytoplasm. It catalyses the reaction Fe-coproporphyrin III + 2 H(+) = coproporphyrin III + Fe(2+). It participates in porphyrin-containing compound metabolism; protoheme biosynthesis. Involved in coproporphyrin-dependent heme b biosynthesis. Catalyzes the insertion of ferrous iron into coproporphyrin III to form Fe-coproporphyrin III. In Lactococcus lactis subsp. cremoris (strain MG1363), this protein is Coproporphyrin III ferrochelatase.